We begin with the raw amino-acid sequence, 125 residues long: KESSAEKFLRQHVDSIDSPGNLSPTYCNQMMLRRNMTKGSCKPVNTFVHEPLKDIKAVCFQENVTCKNGNSNCYKSHASLHITDCRTISSSKYPDCAYKTSQEQKHIIVACEGDPFVPVHYDASV.

The substrate site is built by K7 and R10. H12 serves as the catalytic Proton acceptor. 4 disulfide bridges follow: C27-C85, C41-C96, C59-C111, and C66-C73. N35 is a glycosylation site (N-linked (GlcNAc...) asparagine). Substrate contacts are provided by residues 42-46, K67, and R86; that span reads KPVNT. Catalysis depends on H120, which acts as the Proton donor.

The protein belongs to the pancreatic ribonuclease family. Monomer. Interacts with and forms tight 1:1 complexes with RNH1. Dimerization of two such complexes may occur. Interaction with RNH1 inhibits this protein. As to expression, pancreas.

It is found in the secreted. The catalysed reaction is an [RNA] containing cytidine + H2O = an [RNA]-3'-cytidine-3'-phosphate + a 5'-hydroxy-ribonucleotide-3'-[RNA].. The enzyme catalyses an [RNA] containing uridine + H2O = an [RNA]-3'-uridine-3'-phosphate + a 5'-hydroxy-ribonucleotide-3'-[RNA].. In terms of biological role, endonuclease that catalyzes the cleavage of RNA on the 3' side of pyrimidine nucleotides. Acts on single-stranded and double-stranded RNA. This Spalax ehrenbergi (Middle East blind mole rat) protein is Ribonuclease pancreatic (RNASE1).